A 319-amino-acid chain; its full sequence is ATP-dependent 6-phosphofructokinase (319 aa).

Gly-11 contacts ATP. Position 21 to 25 (21 to 25 (RAVTR)) interacts with ADP. ATP is bound by residues 72-73 (RF) and 102-105 (GDGS). Position 103 (Asp-103) interacts with Mg(2+). Residue 125–127 (SID) participates in substrate binding. The active-site Proton acceptor is the Asp-127. Arg-154 contacts ADP. Substrate contacts are provided by residues Arg-162 and 169 to 171 (MGR). ADP-binding positions include 185-187 (GAD) and 213-215 (KKH). Substrate-binding positions include Glu-222, Arg-243, and 249–252 (HMQR).

This sequence belongs to the phosphofructokinase type A (PFKA) family. ATP-dependent PFK group I subfamily. Prokaryotic clade 'B1' sub-subfamily. As to quaternary structure, homotetramer. Requires Mg(2+) as cofactor.

The protein localises to the cytoplasm. The enzyme catalyses beta-D-fructose 6-phosphate + ATP = beta-D-fructose 1,6-bisphosphate + ADP + H(+). Its pathway is carbohydrate degradation; glycolysis; D-glyceraldehyde 3-phosphate and glycerone phosphate from D-glucose: step 3/4. Allosterically activated by ADP and other diphosphonucleosides, and allosterically inhibited by phosphoenolpyruvate. Functionally, catalyzes the phosphorylation of D-fructose 6-phosphate to fructose 1,6-bisphosphate by ATP, the first committing step of glycolysis. This Lactobacillus gasseri (strain ATCC 33323 / DSM 20243 / BCRC 14619 / CIP 102991 / JCM 1131 / KCTC 3163 / NCIMB 11718 / NCTC 13722 / AM63) protein is ATP-dependent 6-phosphofructokinase.